An 892-amino-acid chain; its full sequence is Bifunctional uridylyltransferase/uridylyl-removing enzyme (892 aa).

The segment at 1-348 (MPNFTGNTRP…LVDAKVHVRP (348 aa)) is uridylyltransferase. The tract at residues 349 to 710 (INERFQARNG…RIHNQEPGTM (362 aa)) is uridylyl-removing. One can recognise an HD domain in the interval 467 to 589 (VDEHTLFLIH…VGDERRLNHL (123 aa)). 2 ACT domains span residues 711–786 (EVFI…LTQP) and 822–892 (VMEL…YLER).

This sequence belongs to the GlnD family. Mg(2+) is required as a cofactor.

It catalyses the reaction [protein-PII]-L-tyrosine + UTP = [protein-PII]-uridylyl-L-tyrosine + diphosphate. The enzyme catalyses [protein-PII]-uridylyl-L-tyrosine + H2O = [protein-PII]-L-tyrosine + UMP + H(+). Uridylyltransferase (UTase) activity is inhibited by glutamine, while glutamine activates uridylyl-removing (UR) activity. In terms of biological role, modifies, by uridylylation and deuridylylation, the PII regulatory proteins (GlnB and homologs), in response to the nitrogen status of the cell that GlnD senses through the glutamine level. Under low glutamine levels, catalyzes the conversion of the PII proteins and UTP to PII-UMP and PPi, while under higher glutamine levels, GlnD hydrolyzes PII-UMP to PII and UMP (deuridylylation). Thus, controls uridylylation state and activity of the PII proteins, and plays an important role in the regulation of nitrogen assimilation and metabolism. This is Bifunctional uridylyltransferase/uridylyl-removing enzyme from Nitrosococcus oceani (strain ATCC 19707 / BCRC 17464 / JCM 30415 / NCIMB 11848 / C-107).